A 758-amino-acid chain; its full sequence is Translation initiation factor IF-2 (758 aa).

Residues 55–168 (EKNVGKQATQ…KTHQPSIPVK (114 aa)) are disordered. 2 stretches are compositionally biased toward polar residues: residues 60-78 (KQATQNISQKSQSNGQQNH) and 86-95 (QRQQSATSKP). A compositionally biased stretch (low complexity) spans 96 to 136 (KVNNQQHSNSSNEKSKNTKGNQNRNMTQNNNNNNNNNNNNR). A tr-type G domain is found at 259 to 428 (ERPPVVTIMG…LLVAEVGELK (170 aa)). Positions 268–275 (GHVDHGKT) are G1. 268–275 (GHVDHGKT) contacts GTP. The G2 stretch occupies residues 293–297 (GITQH). A G3 region spans residues 314 to 317 (DTPG). Residues 314–318 (DTPGH) and 368–371 (NKMD) contribute to the GTP site. The segment at 368–371 (NKMD) is G4. The segment at 404-406 (SAL) is G5.

It belongs to the TRAFAC class translation factor GTPase superfamily. Classic translation factor GTPase family. IF-2 subfamily.

The protein resides in the cytoplasm. Functionally, one of the essential components for the initiation of protein synthesis. Protects formylmethionyl-tRNA from spontaneous hydrolysis and promotes its binding to the 30S ribosomal subunits. Also involved in the hydrolysis of GTP during the formation of the 70S ribosomal complex. The protein is Translation initiation factor IF-2 of Lysinibacillus sphaericus (strain C3-41).